A 493-amino-acid polypeptide reads, in one-letter code: Desmethylyatein synthase (493 aa).

The helical transmembrane segment at 1–21 (METFQCLTLFLLFISTVFILK) threads the bilayer. C434 lines the heme pocket.

Belongs to the cytochrome P450 family. It depends on heme as a cofactor.

The protein resides in the membrane. It carries out the reaction (-)-bursehernin + reduced [NADPH--hemoprotein reductase] + O2 = (-)-5'-demethylyatein + oxidized [NADPH--hemoprotein reductase] + H2O + H(+). It participates in aromatic compound metabolism; phenylpropanoid biosynthesis. Its function is as follows. Cytochrome P450 involved in the biosynthesis of etoposide, a chemotherapeutic compound of the topoisomerase inhibitor family. Catalyzes the conversion of bursehernin to demethylyatein. In Sinopodophyllum hexandrum (Himalayan may apple), this protein is Desmethylyatein synthase.